The primary structure comprises 339 residues: DNA-directed RNA polymerase subunit alpha (339 aa).

Residues 1-233 form an alpha N-terminal domain (alpha-NTD) region; sequence MVREEVAGST…DLFLPFLHAE (233 aa). An alpha C-terminal domain (alpha-CTD) region spans residues 264 to 339; it reads KKGIPLNCIF…IDLLKNKLSF (76 aa).

This sequence belongs to the RNA polymerase alpha chain family. In terms of assembly, in plastids the minimal PEP RNA polymerase catalytic core is composed of four subunits: alpha, beta, beta', and beta''. When a (nuclear-encoded) sigma factor is associated with the core the holoenzyme is formed, which can initiate transcription.

The protein resides in the plastid. It is found in the chloroplast. It carries out the reaction RNA(n) + a ribonucleoside 5'-triphosphate = RNA(n+1) + diphosphate. In terms of biological role, DNA-dependent RNA polymerase catalyzes the transcription of DNA into RNA using the four ribonucleoside triphosphates as substrates. This Bromus inermis (Smooth brome grass) protein is DNA-directed RNA polymerase subunit alpha.